Here is a 263-residue protein sequence, read N- to C-terminus: Pyrrolysine synthase (263 aa).

L-pyrrolysine is bound by residues Leu8, Val57, Ile64, and Ala107. NAD(+) contacts are provided by Lys155, Val156, Asp175, Cys210, Pro228, Ile230, and Glu249.

This sequence belongs to the PylD family.

The catalysed reaction is (3R)-3-methyl-D-ornithyl-N(6)-L-lysine + NAD(+) = L-pyrrolysine + NH4(+) + NADH + 2 H(+). It functions in the pathway amino-acid biosynthesis; L-pyrrolysine biosynthesis. In terms of biological role, catalyzes the ultimate step of the pyrrolysine biosynthesis pathway by converting the isopeptide (3R)-3-methyl-D-ornithyl-N(6)-L-lysine to the 22nd proteinogenic amino acid. Is able to use surrogate substrates such as (3R)-D-ornithyl-N(6)-L-lysine in vitro. The sequence is that of Pyrrolysine synthase from Methanosarcina barkeri (strain Fusaro / DSM 804).